The chain runs to 147 residues: Hemoglobin subunit beta-1 (147 aa).

V2 carries the post-translational modification N-acetylvaline. Positions 3 to 147 constitute a Globin domain; it reads HLTDAEKAAV…VASALAHKYH (145 aa). K18 is modified (N6-succinyllysine). 3 positions are modified to phosphoserine: S45, S51, and S53. K60 bears the N6-succinyllysine mark. Residues H64 and H93 each contribute to the heme b site. Residue R105 is modified to Asymmetric dimethylarginine. T124 carries the phosphothreonine modification.

It belongs to the globin family. Heterotetramer of two alpha chains and two beta chains. As to expression, red blood cells.

Its function is as follows. Involved in oxygen transport from the lung to the various peripheral tissues. This Rattus norvegicus (Rat) protein is Hemoglobin subunit beta-1 (Hbb).